We begin with the raw amino-acid sequence, 339 residues long: Methionine import ATP-binding protein MetN 2 (339 aa).

One can recognise an ABC transporter domain in the interval 2 to 241 (ISFNNVSKVY…PKTKTTQNFV (240 aa)). Residue 38-45 (GFSGAGKS) participates in ATP binding.

The protein belongs to the ABC transporter superfamily. Methionine importer (TC 3.A.1.24) family. The complex is composed of two ATP-binding proteins (MetN), two transmembrane proteins (MetI) and a solute-binding protein (MetQ).

It localises to the cell membrane. It catalyses the reaction L-methionine(out) + ATP + H2O = L-methionine(in) + ADP + phosphate + H(+). The enzyme catalyses D-methionine(out) + ATP + H2O = D-methionine(in) + ADP + phosphate + H(+). Its function is as follows. Part of the ABC transporter complex MetNIQ involved in methionine import. Responsible for energy coupling to the transport system. The polypeptide is Methionine import ATP-binding protein MetN 2 (Bacillus cereus (strain ATCC 10987 / NRS 248)).